Consider the following 222-residue polypeptide: Eukaryotic translation initiation factor 4E-2 (222 aa).

A compositionally biased stretch (basic and acidic residues) spans 1-20; sequence MVDEVEKPVSLEESKTNTRE. Residues 1 to 35 form a disordered region; that stretch reads MVDEVEKPVSLEESKTNTREVEEEGEIVGESDDTM. A compositionally biased stretch (acidic residues) spans 21-33; that stretch reads VEEEGEIVGESDD. 2 EIF4G-binding regions span residues 47-50 and 57-93; these read HALE and FDNPSGKSKQAAWGSSIRPIYTFSTVEDFWSVYNNIH. MRNA-binding positions include 65–70, Lys97, and 115–116; these read KQAAWG and WE. Cys120 and Cys158 are joined by a disulfide. Residues 141–150 form an EIF4G-binding region; it reads YTLLAMIGEQ. Residues 165–170 and 210–214 contribute to the mRNA site; these read RVRQEK and KKLDR.

It belongs to the eukaryotic initiation factor 4E family. As to quaternary structure, EIF4F is a multi-subunit complex, the composition of which varies with external and internal environmental conditions. It is composed of at least EIF4A, EIF4E and EIF4G. EIF4E is also known to interact with other partners. In higher plants two isoforms of EIF4F have been identified, named isoform EIF4F and isoform EIF(iso)4F. Isoform EIF4F has subunits p220 and p26, whereas isoform EIF(iso)4F has subunits p82 and p28. (Microbial infection) Interacts with potyvirus viral genome-linked protein (VPg); this interaction is possible in susceptible hosts but impaired in resistant plants. According to the redox status, the Cys-120-Cys-158 disulfide bridge may have a role in regulating protein function by affecting its ability to bind capped mRNA. In terms of tissue distribution, strongly expressed in susceptible plants but not in resistant ones.

The protein resides in the nucleus. It is found in the cytoplasm. Its function is as follows. Component of the protein complex eIF4F, which is involved in the recognition of the mRNA cap, ATP-dependent unwinding of 5'-terminal secondary structure and recruitment of mRNA to the ribosome. Recognizes and binds the 7-methylguanosine-containing mRNA cap during an early step in the initiation of protein synthesis and facilitates ribosome binding by inducing the unwinding of the mRNAs secondary structures. Key component of recessive resistance to potyviruses. In terms of biological role, (Microbial infection) Susceptibility host factor required for viral infection (e.g. potato virus Y (PVY) and pepper mottle virus (PepMoV)) by recruiting viral RNAs to the host ribosomal complex via an interaction with viral genome-linked protein (VPg). The protein is Eukaryotic translation initiation factor 4E-2 of Nicotiana tabacum (Common tobacco).